The primary structure comprises 30 residues: Trypsin inhibitor 4 (30 aa).

Disulfide bonds link Cys3/Cys20, Cys10/Cys22, and Cys16/Cys29.

It belongs to the protease inhibitor I7 (squash-type serine protease inhibitor) family.

It localises to the secreted. Inhibits trypsin. In Cucumis sativus (Cucumber), this protein is Trypsin inhibitor 4.